Consider the following 272-residue polypeptide: 1,4-dihydroxy-2-naphthoyl-CoA synthase (272 aa).

Residues Arg33, 72–76 (SGGDQ), Tyr84, 116–120 (YAIGG), Thr142, Ser148, Tyr245, and Lys260 contribute to the substrate site. Hydrogencarbonate is bound at residue 141–143 (QTG). The segment covering 253 to 264 (GRDAFKEKRDPD) has biased composition (basic and acidic residues). Residues 253–272 (GRDAFKEKRDPDFDQFPKFP) form a disordered region.

The protein belongs to the enoyl-CoA hydratase/isomerase family. MenB subfamily. It depends on hydrogencarbonate as a cofactor.

The enzyme catalyses 2-succinylbenzoyl-CoA + H(+) = 1,4-dihydroxy-2-naphthoyl-CoA + H2O. Its pathway is quinol/quinone metabolism; 1,4-dihydroxy-2-naphthoate biosynthesis; 1,4-dihydroxy-2-naphthoate from chorismate: step 6/7. The protein operates within quinol/quinone metabolism; menaquinone biosynthesis. Its function is as follows. Converts o-succinylbenzoyl-CoA (OSB-CoA) to 1,4-dihydroxy-2-naphthoyl-CoA (DHNA-CoA). This is 1,4-dihydroxy-2-naphthoyl-CoA synthase from Staphylococcus saprophyticus subsp. saprophyticus (strain ATCC 15305 / DSM 20229 / NCIMB 8711 / NCTC 7292 / S-41).